The following is a 111-amino-acid chain: UPF0060 membrane protein Krad_3114 (111 aa).

4 helical membrane-spanning segments follow: residues 7-27, 33-53, 62-82, and 88-108; these read IALF…VWQG, GLAW…AATL, VLAA…AVVD, and RFDV…MYAP.

The protein belongs to the UPF0060 family.

Its subcellular location is the cell membrane. The polypeptide is UPF0060 membrane protein Krad_3114 (Kineococcus radiotolerans (strain ATCC BAA-149 / DSM 14245 / SRS30216)).